The following is a 1122-amino-acid chain: Angiopoietin-1 receptor (1122 aa).

An N-terminal signal peptide occupies residues 1 to 22 (MDSLAGLVLCGVSLLLYGVVEG). The Extracellular portion of the chain corresponds to 23–746 (AMDLILINSL…SADLGGGKML (724 aa)). A disulfide bridge links C44 with C102. The Ig-like C2-type 1 domain maps to 44–123 (CIASGWHPHE…RTMKMRQQAS (80 aa)). 2 N-linked (GlcNAc...) asparagine glycosylation sites follow: N140 and N158. 3 consecutive EGF-like domains span residues 210–252 (RCEA…RTCE), 254–299 (ACEP…LQCN), and 301–341 (ACPS…LQCE). Disulfide bonds link C211–C220, C224–C233, C227–C240, C242–C251, C255–C264, C268–C274, C280–C287, C289–C298, C302–C311, C315–C323, C317–C329, C331–C340, and C370–C424. Residues 350 to 440 (PQIEDLPDHI…GMVEKPFNIS (91 aa)) form the Ig-like C2-type 2 domain. N399, N438, N464, N558, N595, N648, and N690 each carry an N-linked (GlcNAc...) asparagine glycan. 3 consecutive Fibronectin type-III domains span residues 444–539 (LPEP…TASI), 543–635 (PPRG…TLSD), and 640–733 (QPEN…TLPH). Residues 747–767 (LIAILGSAGMTCITVLLAFLI) traverse the membrane as a helical segment. Residues 768-1122 (MLQLKRANVQ…GIDCSAEEAA (355 aa)) are Cytoplasmic-facing. In terms of domain architecture, Protein kinase spans 822 to 1094 (IKFQDVIGEG…QILVSLNRML (273 aa)). Residues 828-836 (IGEGNFGQV) and K853 each bind ATP. Y858 is subject to Phosphotyrosine; by autocatalysis. Residue D962 is the Proton acceptor of the active site. Phosphotyrosine; by autocatalysis occurs at positions 990, 1100, and 1106.

It belongs to the protein kinase superfamily. Tyr protein kinase family. Tie subfamily. As to quaternary structure, homodimer. Heterodimer with TIE1. Interacts with ANGPT1, ANGPT2 and ANGPT4. At cell-cell contacts in quiescent cells, forms a signaling complex composed of ANGPT1 plus TEK molecules from two adjoining cells. In the absence of endothelial cell-cell contacts, interaction with ANGPT1 mediates contacts with the extracellular matrix. Interacts (tyrosine phosphorylated) with TNIP2. Interacts (tyrosine phosphorylated) with SHC1 (via SH2 domain). Interacts with PTPRB; this promotes endothelial cell-cell adhesion. Interacts with DOK2, GRB2, GRB7, GRB14, PIK3R1 and PTPN11/SHP2. Colocalizes with DOK2 at contacts with the extracellular matrix in migrating cells. Post-translationally, proteolytic processing leads to the shedding of the extracellular domain (soluble TIE-2 alias sTIE-2). In terms of processing, autophosphorylated on tyrosine residues in response to ligand binding. Autophosphorylation occurs in trans, i.e. one subunit of the dimeric receptor phosphorylates tyrosine residues on the other subunit. Autophosphorylation occurs in a sequential manner, where Tyr-990 in the kinase activation loop is phosphorylated first, followed by autophosphorylation at Tyr-1106 and at additional tyrosine residues. ANGPT1-induced phosphorylation is impaired during hypoxia, due to increased expression of ANGPT2. Phosphorylation is important for interaction with GRB14, PIK3R1 and PTPN11. Phosphorylation at Tyr-1100 is important for interaction with GRB2 and GRB7. Phosphorylation at Tyr-1106 is important for interaction with DOK2 and for coupling to downstream signal transduction pathways in endothelial cells. Dephosphorylated by PTPRB. Ubiquitinated. The phosphorylated receptor is ubiquitinated and internalized, leading to its degradation. In terms of tissue distribution, specifically expressed in developing vascular endothelial cells. Abundantly expressed in lung and heart, moderately in brain, liver and kidney, and weakly in thymus, spleen and testis.

It is found in the cell membrane. Its subcellular location is the cell junction. The protein resides in the focal adhesion. The protein localises to the cytoplasm. It localises to the cytoskeleton. It is found in the secreted. It catalyses the reaction L-tyrosyl-[protein] + ATP = O-phospho-L-tyrosyl-[protein] + ADP + H(+). With respect to regulation, angiopoietin binding leads to receptor dimerization and activation by autophosphorylation at Tyr-990 on the kinase activation loop. In terms of biological role, tyrosine-protein kinase that acts as a cell-surface receptor for ANGPT1, ANGPT2 and ANGPT4 and regulates angiogenesis, endothelial cell survival, proliferation, migration, adhesion and cell spreading, reorganization of the actin cytoskeleton, but also maintenance of vascular quiescence. Has anti-inflammatory effects by preventing the leakage of pro-inflammatory plasma proteins and leukocytes from blood vessels. Required for normal angiogenesis and heart development during embryogenesis. Required for postnatal hematopoiesis. After birth, activates or inhibits angiogenesis, depending on the context. Inhibits angiogenesis and promotes vascular stability in quiescent vessels, where endothelial cells have tight contacts. In quiescent vessels, ANGPT1 oligomers recruit TEK to cell-cell contacts, forming complexes with TEK molecules from adjoining cells, and this leads to preferential activation of phosphatidylinositol 3-kinase and the AKT1 signaling cascades. In migrating endothelial cells that lack cell-cell adhesions, ANGT1 recruits TEK to contacts with the extracellular matrix, leading to the formation of focal adhesion complexes, activation of PTK2/FAK and of the downstream kinases MAPK1/ERK2 and MAPK3/ERK1, and ultimately to the stimulation of sprouting angiogenesis. ANGPT1 signaling triggers receptor dimerization and autophosphorylation at specific tyrosine residues that then serve as binding sites for scaffold proteins and effectors. Signaling is modulated by ANGPT2 that has lower affinity for TEK, can promote TEK autophosphorylation in the absence of ANGPT1, but inhibits ANGPT1-mediated signaling by competing for the same binding site. Signaling is also modulated by formation of heterodimers with TIE1, and by proteolytic processing that gives rise to a soluble TEK extracellular domain. The soluble extracellular domain modulates signaling by functioning as decoy receptor for angiopoietins. TEK phosphorylates DOK2, GRB7, GRB14, PIK3R1, SHC1 and TIE1. The chain is Angiopoietin-1 receptor (Tek) from Mus musculus (Mouse).